The primary structure comprises 832 residues: Histone acetyltransferase KAT2B (832 aa).

Residues 1-22 (MSEAGGAGPGGCGAGAGAGAGP) show a composition bias toward gly residues. Disordered regions lie at residues 1 to 54 (MSEA…ACGP) and 395 to 436 (SYNS…DSHV). Positions 24 to 39 (ALPPQPAALPPAPPQG) are enriched in pro residues. Residues 40–54 (SPCAAAAGGSGACGP) are compositionally biased toward low complexity. Residues 395 to 413 (SYNSTSSSLEQPNAGSSSP) show a composition bias toward polar residues. Basic and acidic residues predominate over residues 425 to 436 (PGEKRKMTDSHV). An N-acetyltransferase domain is found at 503–651 (LNQKPNKKIL…GATLMGCELN (149 aa)). Glu-570 functions as the Proton donor/acceptor in the catalytic mechanism. Acetyl-CoA contacts are provided by residues 574–576 (CAV), 581–587 (QVKGYGT), and 612–615 (YAIG). The tract at residues 706 to 725 (IRETGWKPSGKEKSKEPRDP) is disordered. Positions 714–725 (SGKEKSKEPRDP) are enriched in basic and acidic residues. In terms of domain architecture, Bromo spans 723 to 827 (RDPDQLYSTL…KFFFSKIKEA (105 aa)).

Belongs to the acetyltransferase family. GCN5 subfamily. Interacts with SIRT1. Interacts (unsumoylated form) with NR2C1; the interaction promotes transactivation activity. Interacts with EP300, CREBBP and DDX17. Interacts with NCOA1 and NCOA3. Component of a large chromatin remodeling complex, at least composed of MYSM1, KAT2B/PCAF, RBM10 and KIF11/TRIP5. Interacts with NR2C2 (hypophosphorylated and unsumoylated form); the interaction promotes the transactivation activity of NR2C2. Interacts with KLF1; the interaction does not acetylate KLF1 and there is no enhancement of its transactivational activity. Interacts with NFE4. Interacts with MECOM. Interacts with E2F1; the interaction acetylates E2F1 augmenting its DNA-binding and transcriptional activity. Interacts with NPAS2, BMAL1 and CLOCK. Interacts with BCAS3. Interacts with CEBPB. Interacts with NR4A3. Interacts with NFATC2. Interacts with TBX5. Interacts with PLK4. Interacts with RB1; this interaction leads to RB1 acetylation. Interacts with VRK1. In terms of assembly, (Microbial infection) Interacts with and acetylates HIV-1 Tat. As to quaternary structure, (Microbial infection) Interacts with HTLV-1 Tax. Ubiquitously expressed but most abundant in heart and skeletal muscle. Also expressed in the skin, in keratinocytes (at protein level).

The protein localises to the nucleus. It is found in the cytoplasm. It localises to the cytoskeleton. Its subcellular location is the microtubule organizing center. The protein resides in the centrosome. The catalysed reaction is L-lysyl-[histone] + acetyl-CoA = N(6)-acetyl-L-lysyl-[histone] + CoA + H(+). It catalyses the reaction L-lysyl-[protein] + acetyl-CoA = N(6)-acetyl-L-lysyl-[protein] + CoA + H(+). The enzyme catalyses spermidine + acetyl-CoA = N(8)-acetylspermidine + CoA + H(+). With respect to regulation, activated in vitro by very low concentrations of spermidine, but inhibited at spermidine concentrations higher than 4 uM. The activating effect of low spermidine concentrations may be mediated by N(8)-acetylspermidine produced by KAT2B/P/CAF itself acting as a positive feedback loop. Functions as a histone acetyltransferase (HAT) to promote transcriptional activation. Has significant histone acetyltransferase activity with core histones (H3 and H4), and also with nucleosome core particles. Has a a strong preference for acetylation of H3 at 'Lys-9' (H3K9ac). Also acetylates non-histone proteins, such as ACLY, MAPRE1/EB1, PLK4, RRP9/U3-55K and TBX5. Inhibits cell-cycle progression and counteracts the mitogenic activity of the adenoviral oncoprotein E1A. Acts as a circadian transcriptional coactivator which enhances the activity of the circadian transcriptional activators: NPAS2-BMAL1 and CLOCK-BMAL1 heterodimers. Involved in heart and limb development by mediating acetylation of TBX5, acetylation regulating nucleocytoplasmic shuttling of TBX5. Acts as a negative regulator of centrosome amplification by mediating acetylation of PLK4. Acetylates RRP9/U3-55K, a core subunit of the U3 snoRNP complex, impairing pre-rRNA processing. Acetylates MAPRE1/EB1, promoting dynamic kinetochore-microtubule interactions in early mitosis. Also acetylates spermidine. Its function is as follows. (Microbial infection) In case of HIV-1 infection, it is recruited by the viral protein Tat. Regulates Tat's transactivating activity and may help inducing chromatin remodeling of proviral genes. The protein is Histone acetyltransferase KAT2B of Homo sapiens (Human).